The primary structure comprises 710 residues: Protein Smaug homolog 1 (710 aa).

Disordered stretches follow at residues 276–319 (ARGS…FQDE) and 441–476 (NQAT…ESDL). Positions 309 to 318 (QSTACNTFQD) are enriched in polar residues. In terms of domain architecture, SAM spans 319-379 (EGSGMKDVPA…KIVISIQKLK (61 aa)).

The protein belongs to the SMAUG family.

Its subcellular location is the cytoplasm. It is found in the cell projection. It localises to the dendrite. The protein localises to the synapse. The protein resides in the synaptosome. Acts as a translational repressor. This Xenopus laevis (African clawed frog) protein is Protein Smaug homolog 1 (samd4a).